The primary structure comprises 694 residues: Elongation factor G 2 (694 aa).

The tr-type G domain occupies 8–282 (TAIRNIGIMA…AVVSYLPSPL (275 aa)). GTP-binding positions include 17–24 (AHIDAGKT), 81–85 (DTPGH), and 135–138 (NKMD).

It belongs to the TRAFAC class translation factor GTPase superfamily. Classic translation factor GTPase family. EF-G/EF-2 subfamily.

It is found in the cytoplasm. In terms of biological role, catalyzes the GTP-dependent ribosomal translocation step during translation elongation. During this step, the ribosome changes from the pre-translocational (PRE) to the post-translocational (POST) state as the newly formed A-site-bound peptidyl-tRNA and P-site-bound deacylated tRNA move to the P and E sites, respectively. Catalyzes the coordinated movement of the two tRNA molecules, the mRNA and conformational changes in the ribosome. The protein is Elongation factor G 2 of Syntrophomonas wolfei subsp. wolfei (strain DSM 2245B / Goettingen).